A 158-amino-acid polypeptide reads, in one-letter code: NAD(P)H-quinone oxidoreductase subunit J, chloroplastic (158 aa).

Belongs to the complex I 30 kDa subunit family. In terms of assembly, NDH is composed of at least 16 different subunits, 5 of which are encoded in the nucleus.

Its subcellular location is the plastid. It localises to the chloroplast thylakoid membrane. It carries out the reaction a plastoquinone + NADH + (n+1) H(+)(in) = a plastoquinol + NAD(+) + n H(+)(out). The catalysed reaction is a plastoquinone + NADPH + (n+1) H(+)(in) = a plastoquinol + NADP(+) + n H(+)(out). In terms of biological role, NDH shuttles electrons from NAD(P)H:plastoquinone, via FMN and iron-sulfur (Fe-S) centers, to quinones in the photosynthetic chain and possibly in a chloroplast respiratory chain. The immediate electron acceptor for the enzyme in this species is believed to be plastoquinone. Couples the redox reaction to proton translocation, and thus conserves the redox energy in a proton gradient. The protein is NAD(P)H-quinone oxidoreductase subunit J, chloroplastic of Solanum tuberosum (Potato).